The sequence spans 414 residues: Serine hydroxymethyltransferase (414 aa).

Residues leucine 117 and 121-123 (GHL) each bind (6S)-5,6,7,8-tetrahydrofolate. An N6-(pyridoxal phosphate)lysine modification is found at lysine 226.

This sequence belongs to the SHMT family. As to quaternary structure, homodimer. Requires pyridoxal 5'-phosphate as cofactor.

It is found in the cytoplasm. It carries out the reaction (6R)-5,10-methylene-5,6,7,8-tetrahydrofolate + glycine + H2O = (6S)-5,6,7,8-tetrahydrofolate + L-serine. The protein operates within one-carbon metabolism; tetrahydrofolate interconversion. Its pathway is amino-acid biosynthesis; glycine biosynthesis; glycine from L-serine: step 1/1. Its function is as follows. Catalyzes the reversible interconversion of serine and glycine with tetrahydrofolate (THF) serving as the one-carbon carrier. This reaction serves as the major source of one-carbon groups required for the biosynthesis of purines, thymidylate, methionine, and other important biomolecules. Also exhibits THF-independent aldolase activity toward beta-hydroxyamino acids, producing glycine and aldehydes, via a retro-aldol mechanism. In Dictyoglomus turgidum (strain DSM 6724 / Z-1310), this protein is Serine hydroxymethyltransferase.